The chain runs to 130 residues: Small ribosomal subunit protein uS11 (130 aa).

It belongs to the universal ribosomal protein uS11 family. Part of the 30S ribosomal subunit. Interacts with proteins S7 and S18. Binds to IF-3.

In terms of biological role, located on the platform of the 30S subunit, it bridges several disparate RNA helices of the 16S rRNA. Forms part of the Shine-Dalgarno cleft in the 70S ribosome. The chain is Small ribosomal subunit protein uS11 from Shewanella frigidimarina (strain NCIMB 400).